The primary structure comprises 71 residues: ATP synthase subunit c (71 aa).

Transmembrane regions (helical) follow at residues Ile-4–Val-24 and Phe-47–Leu-67.

Belongs to the ATPase C chain family. In terms of assembly, F-type ATPases have 2 components, F(1) - the catalytic core - and F(0) - the membrane proton channel. F(1) has five subunits: alpha(3), beta(3), gamma(1), delta(1), epsilon(1). F(0) has three main subunits: a(1), b(2) and c(10-14). The alpha and beta chains form an alternating ring which encloses part of the gamma chain. F(1) is attached to F(0) by a central stalk formed by the gamma and epsilon chains, while a peripheral stalk is formed by the delta and b chains.

The protein resides in the cell membrane. Its function is as follows. F(1)F(0) ATP synthase produces ATP from ADP in the presence of a proton or sodium gradient. F-type ATPases consist of two structural domains, F(1) containing the extramembraneous catalytic core and F(0) containing the membrane proton channel, linked together by a central stalk and a peripheral stalk. During catalysis, ATP synthesis in the catalytic domain of F(1) is coupled via a rotary mechanism of the central stalk subunits to proton translocation. In terms of biological role, key component of the F(0) channel; it plays a direct role in translocation across the membrane. A homomeric c-ring of between 10-14 subunits forms the central stalk rotor element with the F(1) delta and epsilon subunits. This chain is ATP synthase subunit c, found in Enterococcus hirae (strain ATCC 9790 / DSM 20160 / JCM 8729 / LMG 6399 / NBRC 3181 / NCIMB 6459 / NCDO 1258 / NCTC 12367 / WDCM 00089 / R).